The primary structure comprises 339 residues: Lipoate-protein ligase A (339 aa).

In terms of domain architecture, BPL/LPL catalytic spans 28–211 (NPDSHTLFLW…AFREYYRDTD (184 aa)). ATP is bound by residues Arg-70, 75 to 78 (GAVF), and Lys-129. Lys-129 contributes to the (R)-lipoate binding site.

The protein belongs to the LplA family. As to quaternary structure, monomer.

It is found in the cytoplasm. The enzyme catalyses L-lysyl-[lipoyl-carrier protein] + (R)-lipoate + ATP = N(6)-[(R)-lipoyl]-L-lysyl-[lipoyl-carrier protein] + AMP + diphosphate + H(+). Its pathway is protein modification; protein lipoylation via exogenous pathway; protein N(6)-(lipoyl)lysine from lipoate: step 1/2. It participates in protein modification; protein lipoylation via exogenous pathway; protein N(6)-(lipoyl)lysine from lipoate: step 2/2. In terms of biological role, catalyzes both the ATP-dependent activation of exogenously supplied lipoate to lipoyl-AMP and the transfer of the activated lipoyl onto the lipoyl domains of lipoate-dependent enzymes. The polypeptide is Lipoate-protein ligase A (Psychrobacter cryohalolentis (strain ATCC BAA-1226 / DSM 17306 / VKM B-2378 / K5)).